The primary structure comprises 243 residues: Ion-translocating oxidoreductase complex subunit E (243 aa).

Transmembrane regions (helical) follow at residues Leu-40–Leu-60, Ala-72–Leu-92, Asp-94–Gly-114, Ala-129–Ile-149, Ile-152–Phe-172, and Gly-183–Leu-203.

It belongs to the NqrDE/RnfAE family. In terms of assembly, the complex is composed of six subunits: RnfA, RnfB, RnfC, RnfD, RnfE and RnfG.

The protein resides in the cellular chromatophore membrane. Functionally, part of a membrane-bound complex that couples electron transfer with translocation of ions across the membrane. Required for nitrogen fixation. Involved in electron transfer to nitrogenase. The polypeptide is Ion-translocating oxidoreductase complex subunit E (Rhodobacter capsulatus (Rhodopseudomonas capsulata)).